We begin with the raw amino-acid sequence, 190 residues long: MSKPTREEAKEAVRTLLKFIGEDPTREGLLKTPDRVVNSYTEIFSGYGKDVAEILNTKFYDTCNFQDFILLKDIKFTSFCEHHMLPFIGTVDIAYIPDNCIVGISKLARIVNAFSKRLQIQEKMTVQIAESVQENLKPLGVAVKISALHSCMSMRGVMQDNSVMNTMHYTGIFAEQQKYRYDFLNLTAKR.

Zn(2+) is bound by residues cysteine 80, histidine 83, and cysteine 151.

It belongs to the GTP cyclohydrolase I family. Toroid-shaped homodecamer, composed of two pentamers of five dimers.

The catalysed reaction is GTP + H2O = 7,8-dihydroneopterin 3'-triphosphate + formate + H(+). It functions in the pathway cofactor biosynthesis; 7,8-dihydroneopterin triphosphate biosynthesis; 7,8-dihydroneopterin triphosphate from GTP: step 1/1. This is GTP cyclohydrolase 1 from Rickettsia felis (strain ATCC VR-1525 / URRWXCal2) (Rickettsia azadi).